The chain runs to 105 residues: uncharacterized protein (105 aa).

A helical transmembrane segment spans residues 41–62; that stretch reads GIITKIAASPFVIVLYFNTAFF.

Its subcellular location is the membrane. This is an uncharacterized protein from Saccharomyces cerevisiae (strain ATCC 204508 / S288c) (Baker's yeast).